A 224-amino-acid chain; its full sequence is uncharacterized protein (224 aa).

This sequence to M.tuberculosis Rv2558.

This is an uncharacterized protein from Mycobacterium tuberculosis (strain CDC 1551 / Oshkosh).